A 375-amino-acid polypeptide reads, in one-letter code: Succinyl-diaminopimelate desuccinylase (375 aa).

Residue histidine 66 coordinates Zn(2+). Aspartate 68 is a catalytic residue. Aspartate 99 provides a ligand contact to Zn(2+). The active-site Proton acceptor is glutamate 133. Zn(2+)-binding residues include glutamate 134, glutamate 162, and histidine 348.

It belongs to the peptidase M20A family. DapE subfamily. As to quaternary structure, homodimer. Zn(2+) serves as cofactor. It depends on Co(2+) as a cofactor.

The enzyme catalyses N-succinyl-(2S,6S)-2,6-diaminopimelate + H2O = (2S,6S)-2,6-diaminopimelate + succinate. It participates in amino-acid biosynthesis; L-lysine biosynthesis via DAP pathway; LL-2,6-diaminopimelate from (S)-tetrahydrodipicolinate (succinylase route): step 3/3. Its function is as follows. Catalyzes the hydrolysis of N-succinyl-L,L-diaminopimelic acid (SDAP), forming succinate and LL-2,6-diaminopimelate (DAP), an intermediate involved in the bacterial biosynthesis of lysine and meso-diaminopimelic acid, an essential component of bacterial cell walls. The sequence is that of Succinyl-diaminopimelate desuccinylase from Shigella flexneri serotype 5b (strain 8401).